Reading from the N-terminus, the 329-residue chain is Malate dehydrogenase (329 aa).

Residue 12–18 (GAAGQIG) participates in NAD(+) binding. 2 residues coordinate substrate: R95 and R101. NAD(+)-binding positions include N108, Q115, and 132–134 (VGN). N134 and R165 together coordinate substrate. The active-site Proton acceptor is H190.

The protein belongs to the LDH/MDH superfamily. MDH type 2 family.

It carries out the reaction (S)-malate + NAD(+) = oxaloacetate + NADH + H(+). Functionally, catalyzes the reversible oxidation of malate to oxaloacetate. The polypeptide is Malate dehydrogenase (Herminiimonas arsenicoxydans).